The primary structure comprises 165 residues: Choriogonadotropin subunit beta 3 (165 aa).

A signal peptide spans 1–20; the sequence is MEMFQGLLLLLLLSMGGTWA. Intrachain disulfides connect cysteine 29/cysteine 77, cysteine 43/cysteine 92, cysteine 46/cysteine 130, cysteine 54/cysteine 108, cysteine 58/cysteine 110, and cysteine 113/cysteine 120. N-linked (GlcNAc...) asparagine glycosylation is found at asparagine 33 and asparagine 50. The tract at residues 131-165 is disordered; it reads DDPRFQDSSSSKAPPPSLPSPSRLPGPSDTPILPQ. O-linked (GalNAc...) serine glycosylation is found at serine 141, serine 147, serine 152, and serine 158. Residues 143 to 154 show a composition bias toward pro residues; the sequence is APPPSLPSPSRL.

This sequence belongs to the glycoprotein hormones subunit beta family. As to quaternary structure, heterodimer of a common alpha chain identical in LH, FSH, TSH and HCG and a unique beta chain distinct in each of the hormones. As to expression, high expression in the placenta throughout pregnancy.

It is found in the secreted. Functionally, beta subunit of the human chorionic gonadotropin (hCG). hCG is a complex glycoprotein composed of two glycosylated subunits alpha and beta which are non-covalently associated. The alpha subunit is identical to those in the pituitary gonadotropin hormones (LH, FSH and TSH). The beta subunits are distinct in each of the hormones and confer receptor and biological specificity. Has an essential role in pregnancy and maternal adaptation. Stimulates the ovaries to synthesize the steroids that are essential for the maintenance of pregnancy. In Homo sapiens (Human), this protein is Choriogonadotropin subunit beta 3 (CGB3).